A 428-amino-acid chain; its full sequence is Kynureninase (428 aa).

Residues Thr-104, Thr-105, 132 to 135 (FPSD), Asp-213, His-216, and Tyr-238 contribute to the pyridoxal 5'-phosphate site. At Lys-239 the chain carries N6-(pyridoxal phosphate)lysine. Pyridoxal 5'-phosphate contacts are provided by Trp-267 and Thr-295.

This sequence belongs to the kynureninase family. Homodimer. Pyridoxal 5'-phosphate serves as cofactor.

It catalyses the reaction L-kynurenine + H2O = anthranilate + L-alanine + H(+). The enzyme catalyses 3-hydroxy-L-kynurenine + H2O = 3-hydroxyanthranilate + L-alanine + H(+). Its pathway is amino-acid degradation; L-kynurenine degradation; L-alanine and anthranilate from L-kynurenine: step 1/1. It participates in cofactor biosynthesis; NAD(+) biosynthesis; quinolinate from L-kynurenine: step 2/3. In terms of biological role, catalyzes the cleavage of L-kynurenine (L-Kyn) and L-3-hydroxykynurenine (L-3OHKyn) into anthranilic acid (AA) and 3-hydroxyanthranilic acid (3-OHAA), respectively. The sequence is that of Kynureninase from Bacillus mycoides (strain KBAB4) (Bacillus weihenstephanensis).